The primary structure comprises 407 residues: D-galactonate dehydratase family member Pjdr2_1176 (407 aa).

Mg(2+) is bound at residue D208. H210 contacts D-arabinonate. Positions 234 and 260 each coordinate Mg(2+). D-arabinonate is bound by residues E260, R281, and E337.

The protein belongs to the mandelate racemase/muconate lactonizing enzyme family. GalD subfamily.

Functionally, has no detectable activity with D-mannonate and with a panel of 70 other acid sugars (in vitro), in spite of the conservation of the residues that are expected to be important for catalytic activity and cofactor binding. May have evolved a divergent function. This is D-galactonate dehydratase family member Pjdr2_1176 from Paenibacillus sp. (strain JDR-2).